The following is a 263-amino-acid chain: MADWLIGIIMGAVEGLTEFLPVSSTGHMILTGHLIGFDDDRAKVFEVVIQLGSILAVVVIFWKRLWSLVGIGKVTDGPSLNLLHIIIGMIPAGVLGVLFHSAIKEVLFGPGPVVISLVAGGILMIVAEKFSKPSTARTLDEITYKQAFTIGMFQCLALWPGFSRSGSTISGGLLARVSHTAAAEYTFILAVPMMVAASGLDLIKSWDILSTADIPLFATGFITAFVVAMLAIVSFLKLLSRVKLTPFAYYRFILAAVFYFFIM.

Helical transmembrane passes span 17–37, 42–62, 83–103, 106–126, 142–162, 183–203, 216–236, and 242–262; these read TEFL…LIGF, AKVF…VIFW, LHII…HSAI, VLFG…LMIV, ITYK…WPGF, AEYT…LDLI, LFAT…VSFL, and VKLT…YFFI.

The protein belongs to the UppP family.

The protein localises to the cell membrane. It carries out the reaction di-trans,octa-cis-undecaprenyl diphosphate + H2O = di-trans,octa-cis-undecaprenyl phosphate + phosphate + H(+). Functionally, catalyzes the dephosphorylation of undecaprenyl diphosphate (UPP). Confers resistance to bacitracin. The sequence is that of Undecaprenyl-diphosphatase 2 from Bacillus anthracis.